The primary structure comprises 467 residues: Glutamate--tRNA ligase (467 aa).

Positions 9–19 (PSPTGYLHIGG) match the 'HIGH' region motif. A 'KMSKS' region motif is present at residues 237–241 (KLSKR). Position 240 (Lys-240) interacts with ATP.

Belongs to the class-I aminoacyl-tRNA synthetase family. Glutamate--tRNA ligase type 1 subfamily. As to quaternary structure, monomer.

The protein localises to the cytoplasm. The enzyme catalyses tRNA(Glu) + L-glutamate + ATP = L-glutamyl-tRNA(Glu) + AMP + diphosphate. In terms of biological role, catalyzes the attachment of glutamate to tRNA(Glu) in a two-step reaction: glutamate is first activated by ATP to form Glu-AMP and then transferred to the acceptor end of tRNA(Glu). The chain is Glutamate--tRNA ligase from Xanthomonas campestris pv. campestris (strain B100).